Reading from the N-terminus, the 155-residue chain is Protein U1 (155 aa).

The protein belongs to the nanovirus U1 protein family.

This chain is Protein U1 (DNA-U1), found in Cicer arietinum (Chickpea).